The sequence spans 610 residues: Sodium-coupled monocarboxylate transporter 1 (610 aa).

The Extracellular segment spans residues 1–9; the sequence is MDTPRGIGT. Residues 10-30 traverse the membrane as a helical segment; that stretch reads FVVWDYVVFAGMLVISAAIGI. Topologically, residues 31-51 are cytoplasmic; it reads YYAFAGGGQQTSKDFLMGGRR. A helical transmembrane segment spans residues 52-72; sequence MTAVPVALSLTASFMSAVTVL. Over 73-83 the chain is Extracellular; that stretch reads GTPSEVYRFGA. Residues 84-104 traverse the membrane as a helical segment; sequence IFSIFAFTYFFVVVISAEVFL. Topologically, residues 105–132 are cytoplasmic; it reads PVFYKLGITSTYEYLELRFNKCVRLCGT. Residues 133–153 traverse the membrane as a helical segment; it reads VLFIVQTILYTGIVIYAPALA. The Extracellular segment spans residues 154 to 161; it reads LNQVTGFD. The chain crosses the membrane as a helical span at residues 162–182; the sequence is LWGAVVATGVVCTFYCTLGGL. The Cytoplasmic portion of the chain corresponds to 183–189; sequence KAVIWTD. A helical membrane pass occupies residues 190 to 210; it reads VFQVGIMVAGFASVIIQAVVM. Residues 211–239 lie on the Extracellular side of the membrane; it reads QGGISTILNDAYDGGRLNFWNFNPNPLQR. The helical transmembrane segment at 240–260 threads the bilayer; it reads HTFWTIIIGGTFTWTSIYGVN. Residues 261–279 are Cytoplasmic-facing; it reads QSQVQRYISCKSRFQAKLS. A helical membrane pass occupies residues 280 to 300; it reads LYINLVGLWAILTCSVFCGLA. Over 301–336 the chain is Extracellular; that stretch reads LYSRYHDCDPWTAKKVSAPDQLMPYLVLDILQDYPG. The helical transmembrane segment at 337–359 threads the bilayer; sequence LPGLFVACAYSGTLSTVSSSINA. The Cytoplasmic segment spans residues 360 to 389; the sequence is LAAVTVEDLIKPYFRSLSERSLSWISQGMS. A helical transmembrane segment spans residues 390–410; sequence VVYGALCIGMAALASLMGALL. Residues 411–415 lie on the Extracellular side of the membrane; sequence QAALS. A helical transmembrane segment spans residues 416 to 436; it reads VFGMVGGPLMGLFALGILVPF. Residues 437–439 are Cytoplasmic-facing; the sequence is ANS. A helical transmembrane segment spans residues 440–460; sequence IGALVGLMAGFAISLWVGIGA. Over 461–518 the chain is Extracellular; sequence QIYPPLPERTLPLHLDIQGCNSTYNETNLMTTTEMPFTTSVFQIYNVQRTPLMDNWYS. A glycan (N-linked (GlcNAc...) asparagine) is linked at asparagine 485. The helical transmembrane segment at 519-539 threads the bilayer; it reads LSYLYFSTVGTLVTLLVGILV. The Cytoplasmic portion of the chain corresponds to 540 to 610; it reads SLSTGGRKQN…QSGKSNGTRL (71 aa). The tract at residues 585–610 is disordered; the sequence is GGTDNPAFNHIELNSDQSGKSNGTRL. Residues 596-610 show a composition bias toward polar residues; sequence ELNSDQSGKSNGTRL. Residues 608-610 carry the PDZ-binding motif; sequence TRL.

The protein belongs to the sodium:solute symporter (SSF) (TC 2.A.21) family. Interacts (via PDZ-binding motif) with PDZK1 (via PDZ domains 1 and 3); interaction increases nicotinate transport activity of SLC5A8. Expressed in normal thyroid, localized at the apical pole of thyroid cells facing the colloid lumen, but expression profoundly decreased in thyroid carcinomas. Expressed in normal colon but absent in colon aberrant crypt foci and colon cancers. Present in normal kidney cortex, brain, prostate, gastric mucosa and breast tissue but was significantly down-regulated in primary gliomas, gastric cancer, prostate tumors and breast tumors.

Its subcellular location is the apical cell membrane. The catalysed reaction is (S)-lactate(out) + 2 Na(+)(out) = (S)-lactate(in) + 2 Na(+)(in). It catalyses the reaction propanoate(out) + 2 Na(+)(out) = propanoate(in) + 2 Na(+)(in). It carries out the reaction pyruvate(out) + 2 Na(+)(out) = pyruvate(in) + 2 Na(+)(in). The enzyme catalyses acetate(out) + 2 Na(+)(out) = acetate(in) + 2 Na(+)(in). The catalysed reaction is butanoate(out) + 2 Na(+)(out) = butanoate(in) + 2 Na(+)(in). It catalyses the reaction nicotinate(out) + 2 Na(+)(out) = nicotinate(in) + 2 Na(+)(in). It carries out the reaction (R)-3-hydroxybutanoate(out) + 2 Na(+)(out) = (R)-3-hydroxybutanoate(in) + 2 Na(+)(in). The enzyme catalyses acetoacetate(out) + 2 Na(+)(out) = acetoacetate(in) + 2 Na(+)(in). The catalysed reaction is 4-methyl-2-oxopentanoate(out) + 2 Na(+)(out) = 4-methyl-2-oxopentanoate(in) + 2 Na(+)(in). It catalyses the reaction 5-oxo-L-proline(out) + 2 Na(+)(out) = 5-oxo-L-proline(in) + 2 Na(+)(in). It carries out the reaction iodide(out) = iodide(in). The enzyme catalyses chloride(in) = chloride(out). The catalysed reaction is nitrate(in) = nitrate(out). It catalyses the reaction bromide(in) = bromide(out). With respect to regulation, increase of iodide influx inhibited by addition of perchlorate (NaClO(4)), a competitive inhibitor of iodide uptake catalyzed by sodium iodide symporter (NIS). Cotransport of monocarboxylates and nicotinate strongly inhibited by probenecid, nonsteroid anti-inflammatory drugs (ibuprofen, fenoprofen, ketprofen, naproxen) in a Na(+)-dependent manner or by prolonged exposure to external concentrations of monocarboxylates. Acts as an electrogenic sodium (Na(+)) and chloride (Cl-)-dependent sodium-coupled solute transporter, including transport of monocarboxylates (short-chain fatty acids including L-lactate, D-lactate, pyruvate, acetate, propionate, valerate and butyrate), mocarboxylate drugs (nicotinate, benzoate, salicylate and 5-aminosalicylate) and ketone bodies (beta-D-hydroxybutyrate, acetoacetate and alpha-ketoisocaproate), with a Na(+):substrate stoichiometry of between 4:1 and 2:1. Catalyzes passive carrier mediated diffusion of iodide. Mediates iodide transport from the thyrocyte into the colloid lumen through the apical membrane. May be responsible for the absorption of D-lactate and monocarboxylate drugs from the intestinal tract. Acts as a tumor suppressor, suppressing colony formation in colon cancer, prostate cancer and glioma cell lines. May play a critical role in the entry of L-lactate and ketone bodies into neurons by a process driven by an electrochemical Na(+) gradient and hence contribute to the maintenance of the energy status and function of neurons. Mediates sodium-coupled electrogenic transport of pyroglutamate (5-oxo-L-proline). Can mediate the transport of chloride, bromide, iodide and nitrate ions when the external concentration of sodium ions is reduced. The protein is Sodium-coupled monocarboxylate transporter 1 of Homo sapiens (Human).